Consider the following 348-residue polypeptide: Protein-glutamate methylesterase/protein-glutamine glutaminase 5 (348 aa).

Residues 8-125 (RVLVVDDSAF…TERLYELGGE (118 aa)) enclose the Response regulatory domain. The residue at position 59 (Asp-59) is a 4-aspartylphosphate. Residues 157–348 (RAAAKSLVVV…MLALLRRHVR (192 aa)) form the CheB-type methylesterase domain. Residues Ser-169, His-196, and Asp-292 contribute to the active site.

It belongs to the CheB family. In terms of processing, phosphorylated by CheA. Phosphorylation of the N-terminal regulatory domain activates the methylesterase activity.

Its subcellular location is the cytoplasm. The enzyme catalyses [protein]-L-glutamate 5-O-methyl ester + H2O = L-glutamyl-[protein] + methanol + H(+). It carries out the reaction L-glutaminyl-[protein] + H2O = L-glutamyl-[protein] + NH4(+). Involved in chemotaxis. Part of a chemotaxis signal transduction system that modulates chemotaxis in response to various stimuli. Catalyzes the demethylation of specific methylglutamate residues introduced into the chemoreceptors (methyl-accepting chemotaxis proteins or MCP) by CheR. Also mediates the irreversible deamidation of specific glutamine residues to glutamic acid. The sequence is that of Protein-glutamate methylesterase/protein-glutamine glutaminase 5 from Myxococcus xanthus (strain DK1622).